The sequence spans 382 residues: Type II secretion system protein L (382 aa).

Residues 1–233 lie on the Cytoplasmic side of the membrane; that stretch reads MSGVSALFLP…QQSSQWRRWR (233 aa). Residues 234 to 254 form a helical membrane-spanning segment; the sequence is PLLGLVGLWLVLQWGFTLVQA. Residues 255–382 lie on the Periplasmic side of the membrane; that stretch reads WQLQREGDRY…TVSARLVIGG (128 aa).

Belongs to the GSP L family. As to quaternary structure, type II secretion system is composed of four main components: the outer membrane complex, the inner membrane complex, the cytoplasmic secretion ATPase and the periplasm-spanning pseudopilus. Forms homodimers. Interacts with XcpZ/GspM. Interacts with XcpR/GspE and XcpS/GspF.

The protein localises to the cell inner membrane. Functionally, inner membrane component of the type II secretion system required for the energy-dependent secretion of extracellular factors such as proteases and toxins from the periplasm. Plays a role in the complex assembly and recruits XcpZ resulting in a stable complex in the inner membrane. Provides thus a link between the energy-providing XcpR protein in the cytoplasm and the rest of the T2SS machinery. This is Type II secretion system protein L (xcpY) from Pseudomonas aeruginosa (strain ATCC 15692 / DSM 22644 / CIP 104116 / JCM 14847 / LMG 12228 / 1C / PRS 101 / PAO1).